The chain runs to 480 residues: Glutamate--tRNA ligase (480 aa).

The 'HIGH' region motif lies at 9–19 (PSPTGDPHVGT). A 'KMSKS' region motif is present at residues 253–257 (KISKR). Position 256 (K256) interacts with ATP.

This sequence belongs to the class-I aminoacyl-tRNA synthetase family. Glutamate--tRNA ligase type 1 subfamily. Monomer.

The protein resides in the cytoplasm. It catalyses the reaction tRNA(Glu) + L-glutamate + ATP = L-glutamyl-tRNA(Glu) + AMP + diphosphate. Catalyzes the attachment of glutamate to tRNA(Glu) in a two-step reaction: glutamate is first activated by ATP to form Glu-AMP and then transferred to the acceptor end of tRNA(Glu). In Deinococcus geothermalis (strain DSM 11300 / CIP 105573 / AG-3a), this protein is Glutamate--tRNA ligase.